Reading from the N-terminus, the 963-residue chain is uncharacterized protein (963 aa).

Coiled-coil stretches lie at residues 176–236 and 373–467; these read NGRN…HIRM and DYEW…KKTV. The helical transmembrane segment at 468–488 threads the bilayer; sequence IAAGMLFIVLFSLLQQWIPAI. Coiled coils occupy residues 536–570 and 647–789; these read RNKQ…AEMA and ALHT…LEAS.

The protein localises to the cell membrane. This is an uncharacterized protein from Bacillus subtilis (strain 168).